The sequence spans 514 residues: Cilia- and flagella-associated protein 53 (514 aa).

Coiled coils occupy residues 91 to 176 (VINT…EKKV) and 205 to 478 (WEED…AGLA). Disordered regions lie at residues 261-296 (QNKAQIKREDEQEKLQKQKRRQETRSSLKKAVQDKI) and 495-514 (QALSQNVHPMRRGYPDKPPL).

Belongs to the CFAP53 family. As to quaternary structure, microtubule inner protein component of sperm flagellar doublet microtubules. Interacts with PIERCE1 and PIERCE2; the interactions link outer dynein arms docking complex (ODA-DC) to the internal microtubule inner proteins (MIP) in cilium axoneme. Interacts with CCDC38. Interacts with CCDC42 and IFT88. Interacts with centriolar satellite proteins PIBF1/CEP90 and PCM1. Interacts with dyneins DNAIC1, DNAIC2 AND DNAH11 and with ODA-DC component ODAD4/TTC25. In terms of tissue distribution, expressed predominantly in testis (at protein level). In embryos at 8 dpc, specifically expressed in the node, in particular within the pit cells that are located at the center of the node and have rotating monocilia on their apical surface. In the adult, expressed in epithelial cells of the trachea, brain ventricles, oviduct and testis.

The protein localises to the cytoplasm. The protein resides in the cytoskeleton. Its subcellular location is the cilium axoneme. It localises to the flagellum axoneme. It is found in the microtubule organizing center. The protein localises to the centrosome. The protein resides in the centriolar satellite. Its subcellular location is the spindle pole. Functionally, microtubule inner protein (MIP) part of the dynein-decorated doublet microtubules (DMTs) in cilia axoneme, which is required for motile cilia beating. Regulates motility patterns of both 9+0 and 9+2 motile cilia through differential localization and recruitment of axonemal dynein components. Required for centriolar satellite integrity and non-motile cilium assembly. Required for motile cilium formation. Through its role in the beating of primary cilia, involved in the establishment of organ laterality during embryogenesis. Required for sperm flagellum biogenesis and is essential for male fertility. This is Cilia- and flagella-associated protein 53 from Mus musculus (Mouse).